Reading from the N-terminus, the 30-residue chain is Cycloviolacin-O18 (30 aa).

Residues 1-30 (GIPCGESCVYIPCTVTALAGCKCKSKVCYN) constitute a cross-link (cyclopeptide (Gly-Asn)). 3 cysteine pairs are disulfide-bonded: Cys4/Cys21, Cys8/Cys23, and Cys13/Cys28.

In terms of processing, this is a cyclic peptide. Expressed in leaves, petals and petioles but not in roots and runners (at protein level).

Probably participates in a plant defense mechanism. This chain is Cycloviolacin-O18, found in Viola odorata (Sweet violet).